The primary structure comprises 90 residues: UPF0297 protein lmo1503 (90 aa).

The protein belongs to the UPF0297 family.

The polypeptide is UPF0297 protein lmo1503 (Listeria monocytogenes serovar 1/2a (strain ATCC BAA-679 / EGD-e)).